The chain runs to 361 residues: MSNVFNFSAGPAMMPPAVLKKAQEELLNWQGQGTSVMEVSHRGKYFMELITQADKDFRELYNIPENYKILFLQGGARGQFAAIPMNLANNKGKALYLNTGHWSATAAKEARNFTEVDELNITEQIDGLTRVNRLDFSDIAEQYDYVHYCPNETITGVEINEIPNVGNAVLVADMSSNIMARKLDISKFGIIYAGAQKNLGPAGIVIVIVREDLIGHARKATPSIWNYEVQANADSMINTPPTFAWYLCSLVFKDLLANGGIDTVEKRNAQKAALLYDYLDQTVFYHNTIAKENRSVMNVTFTTGDDQLNAKFVAQATEAGLQALKGHKVFGGMRASIYNAMPVEGVEALIAFMKKFEAENA.

L-glutamate is bound at residue Arg42. Residues 76-77, Trp102, Thr153, Asp173, and Gln196 each bind pyridoxal 5'-phosphate; that span reads AR. Lys197 is modified (N6-(pyridoxal phosphate)lysine). 238–239 contributes to the pyridoxal 5'-phosphate binding site; the sequence is NT.

The protein belongs to the class-V pyridoxal-phosphate-dependent aminotransferase family. SerC subfamily. As to quaternary structure, homodimer. Pyridoxal 5'-phosphate serves as cofactor.

It is found in the cytoplasm. The catalysed reaction is O-phospho-L-serine + 2-oxoglutarate = 3-phosphooxypyruvate + L-glutamate. It carries out the reaction 4-(phosphooxy)-L-threonine + 2-oxoglutarate = (R)-3-hydroxy-2-oxo-4-phosphooxybutanoate + L-glutamate. Its pathway is amino-acid biosynthesis; L-serine biosynthesis; L-serine from 3-phospho-D-glycerate: step 2/3. The protein operates within cofactor biosynthesis; pyridoxine 5'-phosphate biosynthesis; pyridoxine 5'-phosphate from D-erythrose 4-phosphate: step 3/5. Its function is as follows. Catalyzes the reversible conversion of 3-phosphohydroxypyruvate to phosphoserine and of 3-hydroxy-2-oxo-4-phosphonooxybutanoate to phosphohydroxythreonine. This is Phosphoserine aminotransferase from Mannheimia succiniciproducens (strain KCTC 0769BP / MBEL55E).